The chain runs to 397 residues: CCA-adding enzyme (397 aa).

2 residues coordinate ATP: G27 and R30. 2 residues coordinate CTP: G27 and R30. Positions 40 and 42 each coordinate Mg(2+). Positions 111, 154, 157, 160, and 163 each coordinate ATP. 5 residues coordinate CTP: R111, D154, R157, R160, and R163.

Belongs to the tRNA nucleotidyltransferase/poly(A) polymerase family. Bacterial CCA-adding enzyme type 3 subfamily. Homodimer. Requires Mg(2+) as cofactor.

It carries out the reaction a tRNA precursor + 2 CTP + ATP = a tRNA with a 3' CCA end + 3 diphosphate. The catalysed reaction is a tRNA with a 3' CCA end + 2 CTP + ATP = a tRNA with a 3' CCACCA end + 3 diphosphate. Catalyzes the addition and repair of the essential 3'-terminal CCA sequence in tRNAs without using a nucleic acid template. Adds these three nucleotides in the order of C, C, and A to the tRNA nucleotide-73, using CTP and ATP as substrates and producing inorganic pyrophosphate. tRNA 3'-terminal CCA addition is required both for tRNA processing and repair. Also involved in tRNA surveillance by mediating tandem CCA addition to generate a CCACCA at the 3' terminus of unstable tRNAs. While stable tRNAs receive only 3'-terminal CCA, unstable tRNAs are marked with CCACCA and rapidly degraded. This chain is CCA-adding enzyme, found in Anoxybacillus flavithermus (strain DSM 21510 / WK1).